The sequence spans 794 residues: Phenylalanine--tRNA ligase beta subunit (794 aa).

Positions A39–R148 constitute a tRNA-binding domain. The 76-residue stretch at P399–S474 folds into the B5 domain. Positions 452, 458, 461, and 462 each coordinate Mg(2+). Residues S700–R793 enclose the FDX-ACB domain.

It belongs to the phenylalanyl-tRNA synthetase beta subunit family. Type 1 subfamily. Tetramer of two alpha and two beta subunits. Mg(2+) serves as cofactor.

It localises to the cytoplasm. It catalyses the reaction tRNA(Phe) + L-phenylalanine + ATP = L-phenylalanyl-tRNA(Phe) + AMP + diphosphate + H(+). The polypeptide is Phenylalanine--tRNA ligase beta subunit (Dechloromonas aromatica (strain RCB)).